Reading from the N-terminus, the 289-residue chain is Delta-sarcoglycan (289 aa).

Topologically, residues 1-35 are cytoplasmic; sequence MPQEQYTHHRSTMPGSVGPQVYKVGIYGWRKRCLY. Residues 36-56 form a helical; Signal-anchor for type II membrane protein membrane-spanning segment; sequence FFVLLLMILILVNLAMTIWIL. Residues 57 to 289 lie on the Extracellular side of the membrane; that stretch reads KVMNFTIDGM…TCQINTSVCL (233 aa). Residues Asn-60 and Asn-108 are each glycosylated (N-linked (GlcNAc...) asparagine). 2 cysteine pairs are disulfide-bonded: Cys-263/Cys-288 and Cys-265/Cys-281. N-linked (GlcNAc...) asparagine glycosylation occurs at Asn-284.

Belongs to the sarcoglycan beta/delta/gamma/zeta family. Interacts with FLNC and DAG1. Cross-link to form 2 major subcomplexes: one consisting of SGCB, SGCD and SGCG and the other consisting of SGCB and SGCD. The association between SGCB and SGCG is particularly strong while SGCA is loosely associated with the other sarcoglycans. Glycosylated. Post-translationally, disulfide bonds are present. As to expression, most strongly expressed in skeletal and cardiac muscle. Also detected in smooth muscle. Weak expression in brain and lung.

The protein localises to the cell membrane. It localises to the sarcolemma. Its subcellular location is the cytoplasm. It is found in the cytoskeleton. Functionally, component of the sarcoglycan complex, a subcomplex of the dystrophin-glycoprotein complex which forms a link between the F-actin cytoskeleton and the extracellular matrix. The polypeptide is Delta-sarcoglycan (SGCD) (Homo sapiens (Human)).